The following is a 96-amino-acid chain: Small ribosomal subunit protein bS18c (96 aa).

This sequence belongs to the bacterial ribosomal protein bS18 family. Part of the 30S ribosomal subunit.

The protein resides in the plastid. The protein localises to the chloroplast. The polypeptide is Small ribosomal subunit protein bS18c (rps18) (Pinus thunbergii (Japanese black pine)).